The primary structure comprises 424 residues: Hemagglutinin-esterase (424 aa).

Positions 1–16 (MFLLPRFVLVSCIIGS) are cleaved as a signal peptide. Residues 7-127 (FVLVSCIIGS…SNDIWMQNKG (121 aa)) are esterase domain 1. At 17–392 (LGFDNPPTNV…PICVYDPLPL (376 aa)) the chain is on the virion surface side. S40 functions as the Nucleophile in the catalytic mechanism. An intrachain disulfide couples C44 to C65. Residues N54, N89, N153, N236, and N301 are each glycosylated (N-linked (GlcNAc...) asparagine; by host). Disulfide bonds link C113–C162, C197–C276, and C205–C249. The segment at 128-266 (LFYTQVYKNM…GNYLAISNEL (139 aa)) is receptor binding. The interval 267-379 (LLTVPTKAIC…RCPTAADINN (113 aa)) is esterase domain 2. A disulfide bridge connects residues C307 and C312. N316 is a glycosylation site (N-linked (GlcNAc...) asparagine; by host). Active-site charge relay system residues include D326 and H329. Cysteines 347 and 371 form a disulfide. N-linked (GlcNAc...) asparagine; by host glycosylation is present at N358. A helical transmembrane segment spans residues 393–413 (ILLGILLGVAVIIIVVLLLYF). At 414–424 (MVDNGTRLHDA) the chain is on the intravirion side. N-linked (GlcNAc...) asparagine; by host glycosylation occurs at N417.

Belongs to the influenza type C/coronaviruses hemagglutinin-esterase family. In terms of assembly, homodimer; disulfide-linked. Forms a complex with the M protein in the pre-Golgi. Associates then with S-M complex to form a ternary complex S-M-HE. Post-translationally, N-glycosylated in the host RER.

The protein localises to the virion membrane. Its subcellular location is the host cell membrane. It catalyses the reaction N-acetyl-9-O-acetylneuraminate + H2O = N-acetylneuraminate + acetate + H(+). It carries out the reaction N-acetyl-4-O-acetylneuraminate + H2O = N-acetylneuraminate + acetate + H(+). Functionally, structural protein that makes short spikes at the surface of the virus. Contains receptor binding and receptor-destroying activities. Mediates de-O-acetylation of N-acetyl-4-O-acetylneuraminic acid, which is probably the receptor determinant recognized by the virus on the surface of erythrocytes and susceptible cells. This receptor-destroying activity is important for virus release as it probably helps preventing self-aggregation and ensures the efficient spread of the progeny virus from cell to cell. May serve as a secondary viral attachment protein for initiating infection, the spike protein being the major one. May become a target for both the humoral and the cellular branches of the immune system. This chain is Hemagglutinin-esterase, found in Bovine coronavirus (strain LY-138) (BCoV).